Reading from the N-terminus, the 255-residue chain is Ribonuclease HII (255 aa).

Residues 72–255 (AIICGIDEVG…KSFEPIKSLL (184 aa)) form the RNase H type-2 domain. The a divalent metal cation site is built by aspartate 78, glutamate 79, and aspartate 170.

This sequence belongs to the RNase HII family. It depends on Mn(2+) as a cofactor. The cofactor is Mg(2+).

The protein localises to the cytoplasm. It carries out the reaction Endonucleolytic cleavage to 5'-phosphomonoester.. Functionally, endonuclease that specifically degrades the RNA of RNA-DNA hybrids. The protein is Ribonuclease HII of Staphylococcus aureus (strain bovine RF122 / ET3-1).